A 307-amino-acid chain; its full sequence is Ornithine carbamoyltransferase (307 aa).

Carbamoyl phosphate is bound by residues 50–53 (STRT), glutamine 77, arginine 101, and 128–131 (HPCQ). L-ornithine-binding positions include asparagine 160, aspartate 224, and 228–229 (SM). Carbamoyl phosphate is bound by residues 264-265 (CL) and arginine 292.

It belongs to the aspartate/ornithine carbamoyltransferase superfamily. OTCase family.

It localises to the cytoplasm. It catalyses the reaction carbamoyl phosphate + L-ornithine = L-citrulline + phosphate + H(+). Its pathway is amino-acid biosynthesis; L-arginine biosynthesis; L-arginine from L-ornithine and carbamoyl phosphate: step 1/3. In terms of biological role, reversibly catalyzes the transfer of the carbamoyl group from carbamoyl phosphate (CP) to the N(epsilon) atom of ornithine (ORN) to produce L-citrulline. This chain is Ornithine carbamoyltransferase, found in Mycolicibacterium gilvum (strain PYR-GCK) (Mycobacterium gilvum (strain PYR-GCK)).